A 589-amino-acid polypeptide reads, in one-letter code: Proton pump-interactor 2 (589 aa).

Residues Glu-205 to Lys-245 adopt a coiled-coil conformation. Composition is skewed to basic and acidic residues over residues Lys-370–Ser-383, Thr-395–Asp-408, Val-426–Gln-450, and Glu-504–Ser-534. Disordered stretches follow at residues Lys-370–Gln-450 and Lys-485–Ser-534. Positions Lys-431–Ser-500 form a coiled coil. Residues Trp-568 to Leu-588 traverse the membrane as a helical segment.

Belongs to the plant Proton pump-interactor protein family. In terms of tissue distribution, expressed in seedlings and flowers.

It localises to the cell membrane. Its subcellular location is the endoplasmic reticulum membrane. In terms of biological role, may regulate plasma membrane ATPase activity. The polypeptide is Proton pump-interactor 2 (PPI2) (Arabidopsis thaliana (Mouse-ear cress)).